Reading from the N-terminus, the 46-residue chain is Defensin-like protein 2 (46 aa).

Cystine bridges form between Cys3–Cys46, Cys13–Cys33, Cys19–Cys40, and Cys23–Cys42.

As to quaternary structure, monomer. Present in seeds, cotyledons and leaves. Not found in roots or stems.

Has antibacterial activity against the Gram-positive bacterium S.aureus and the Gram-negative bacteria E.coli and P.syringae. Does not have antibacterial activity against the phytopathogenic bacteria R.solanacearum, Rhataybacter sp and Erwinia sp. Does not inhibit trypsin, chymotrypsin or alpha-amylases. This is Defensin-like protein 2 from Vigna unguiculata (Cowpea).